Reading from the N-terminus, the 511-residue chain is Maturase K (511 aa).

This sequence belongs to the intron maturase 2 family. MatK subfamily.

It localises to the plastid. The protein localises to the chloroplast. Its function is as follows. Usually encoded in the trnK tRNA gene intron. Probably assists in splicing its own and other chloroplast group II introns. In Phleum pratense (Common timothy), this protein is Maturase K.